Here is a 214-residue protein sequence, read N- to C-terminus: Thiamine pyrophosphokinase (214 aa).

Belongs to the thiamine pyrophosphokinase family.

It catalyses the reaction thiamine + ATP = thiamine diphosphate + AMP + H(+). Its pathway is cofactor biosynthesis; thiamine diphosphate biosynthesis; thiamine diphosphate from thiamine: step 1/1. Catalyzes the ATP-dependent phosphorylation of thiamine to thiamine pyrophosphate. Is involved in thiamine salvage. In Bacillus subtilis (strain 168), this protein is Thiamine pyrophosphokinase.